The sequence spans 469 residues: 3-isopropylmalate dehydratase large subunit (469 aa).

Residues Cys-347, Cys-410, and Cys-413 each coordinate [4Fe-4S] cluster.

The protein belongs to the aconitase/IPM isomerase family. LeuC type 1 subfamily. As to quaternary structure, heterodimer of LeuC and LeuD. The cofactor is [4Fe-4S] cluster.

It carries out the reaction (2R,3S)-3-isopropylmalate = (2S)-2-isopropylmalate. Its pathway is amino-acid biosynthesis; L-leucine biosynthesis; L-leucine from 3-methyl-2-oxobutanoate: step 2/4. Functionally, catalyzes the isomerization between 2-isopropylmalate and 3-isopropylmalate, via the formation of 2-isopropylmaleate. The protein is 3-isopropylmalate dehydratase large subunit of Burkholderia vietnamiensis (strain G4 / LMG 22486) (Burkholderia cepacia (strain R1808)).